Reading from the N-terminus, the 624-residue chain is Polycomb group protein EMF2A (624 aa).

Residues 338–359 (CPFCLVRCGNFKGLECHMTSSH) form a C2H2-type zinc finger. Positions 420–445 (DAHIMESGSPEETQAESEDDVQEENE) are disordered. The span at 432–445 (TQAESEDDVQEENE) shows a compositional bias: acidic residues. Positions 474–609 (LSANRADPRN…SARTMDTCNR (136 aa)) are VEFS-box.

This sequence belongs to the VEFS (VRN2-EMF2-FIS2-SU(Z)12) family. In terms of assembly, component of the polycomb repressive complex 2 (PRC2), which methylates 'Lys-27' residues of histone H3 (H3K27me3), leading to transcriptional repression of the affected target gene. As to expression, widely expressed. Highly expressed in shoot apical meristem and inflorescence meristem. Expressed in roots, leaves and immature seeds.

In terms of biological role, polycomb group (PcG) protein. PcG proteins act by forming multiprotein complexes, which are required to maintain the transcriptionally repressive state of homeotic genes throughout development. PcG proteins are not required to initiate repression, but to maintain it during later stages of development. They act via the methylation of histones, rendering chromatin heritably changed in its expressibility. The sequence is that of Polycomb group protein EMF2A from Oryza sativa subsp. japonica (Rice).